The primary structure comprises 474 residues: Probable phenylalanine--tRNA ligase alpha subunit (474 aa).

A contains the major tRNA-Phe binding sites region spans residues 1–150 (MSLSQKILEL…KRKLIYQAKE (150 aa)). L-phenylalanine contacts are provided by residues Thr-308, 350-352 (QVE), and Tyr-390. Glu-392 serves as a coordination point for Mg(2+). Phe-416 is a binding site for L-phenylalanine.

It belongs to the class-II aminoacyl-tRNA synthetase family. Phe-tRNA synthetase alpha subunit type 2 subfamily. In terms of assembly, tetramer of two alpha and two beta subunits. It depends on Mg(2+) as a cofactor.

The protein resides in the cytoplasm. The enzyme catalyses tRNA(Phe) + L-phenylalanine + ATP = L-phenylalanyl-tRNA(Phe) + AMP + diphosphate + H(+). The polypeptide is Probable phenylalanine--tRNA ligase alpha subunit (Vairimorpha ceranae (strain BRL01) (Microsporidian parasite)).